Consider the following 185-residue polypeptide: UPF0200 protein TK1334 (185 aa).

Residue 7–14 (GMPGSGKS) participates in ATP binding.

The protein belongs to the UPF0200 family.

The sequence is that of UPF0200 protein TK1334 from Thermococcus kodakarensis (strain ATCC BAA-918 / JCM 12380 / KOD1) (Pyrococcus kodakaraensis (strain KOD1)).